A 505-amino-acid chain; its full sequence is Histidine ammonia-lyase (505 aa).

Positions 141-143 (ASG) form a cross-link, 5-imidazolinone (Ala-Gly). Serine 142 carries the post-translational modification 2,3-didehydroalanine (Ser).

This sequence belongs to the PAL/histidase family. Contains an active site 4-methylidene-imidazol-5-one (MIO), which is formed autocatalytically by cyclization and dehydration of residues Ala-Ser-Gly.

It is found in the cytoplasm. It carries out the reaction L-histidine = trans-urocanate + NH4(+). Its pathway is amino-acid degradation; L-histidine degradation into L-glutamate; N-formimidoyl-L-glutamate from L-histidine: step 1/3. The polypeptide is Histidine ammonia-lyase (Bacillus thuringiensis subsp. konkukian (strain 97-27)).